The primary structure comprises 570 residues: Protein translocase subunit SecD (570 aa).

The span at 104 to 117 (GANATGTPSASETG) shows a compositional bias: polar residues. The interval 104-198 (GANATGTPSA…SASASGDDAT (95 aa)) is disordered. Residues 122–146 (KATDKATDKATDKATDGDKATDGDK) show a composition bias toward basic and acidic residues. Composition is skewed to low complexity over residues 147–161 (ASGT…SATS) and 172–196 (ADPS…SGDD). Transmembrane regions (helical) follow at residues 370–390 (AGLI…LFYY), 395–415 (FIAV…MALL), 419–439 (IGFA…GITA), 474–494 (ILVS…VTVG), and 498–518 (GFAF…FLFT). Positions 540–570 (LDPKALGAKPPLRRTRRPSRPAAGPVDPKEA) are disordered.

This sequence belongs to the SecD/SecF family. SecD subfamily. In terms of assembly, forms a complex with SecF. Part of the essential Sec protein translocation apparatus which comprises SecA, SecYEG and auxiliary proteins SecDF. Other proteins may also be involved.

The protein resides in the cell membrane. In terms of biological role, part of the Sec protein translocase complex. Interacts with the SecYEG preprotein conducting channel. SecDF uses the proton motive force (PMF) to complete protein translocation after the ATP-dependent function of SecA. In Streptomyces coelicolor (strain ATCC BAA-471 / A3(2) / M145), this protein is Protein translocase subunit SecD.